The sequence spans 213 residues: ATP phosphoribosyltransferase (213 aa).

This sequence belongs to the ATP phosphoribosyltransferase family. Short subfamily. In terms of assembly, heteromultimer composed of HisG and HisZ subunits.

It is found in the cytoplasm. The enzyme catalyses 1-(5-phospho-beta-D-ribosyl)-ATP + diphosphate = 5-phospho-alpha-D-ribose 1-diphosphate + ATP. It participates in amino-acid biosynthesis; L-histidine biosynthesis; L-histidine from 5-phospho-alpha-D-ribose 1-diphosphate: step 1/9. Its function is as follows. Catalyzes the condensation of ATP and 5-phosphoribose 1-diphosphate to form N'-(5'-phosphoribosyl)-ATP (PR-ATP). Has a crucial role in the pathway because the rate of histidine biosynthesis seems to be controlled primarily by regulation of HisG enzymatic activity. This chain is ATP phosphoribosyltransferase (hisG), found in Listeria innocua serovar 6a (strain ATCC BAA-680 / CLIP 11262).